Here is a 432-residue protein sequence, read N- to C-terminus: Enolase (432 aa).

Residue Gln163 coordinates (2R)-2-phosphoglycerate. The Proton donor role is filled by Glu205. Mg(2+)-binding residues include Asp242, Glu285, and Asp312. (2R)-2-phosphoglycerate contacts are provided by Lys337, Arg366, Ser367, and Lys388. Lys337 acts as the Proton acceptor in catalysis.

Belongs to the enolase family. Mg(2+) serves as cofactor.

It is found in the cytoplasm. Its subcellular location is the secreted. The protein localises to the cell surface. The enzyme catalyses (2R)-2-phosphoglycerate = phosphoenolpyruvate + H2O. It functions in the pathway carbohydrate degradation; glycolysis; pyruvate from D-glyceraldehyde 3-phosphate: step 4/5. In terms of biological role, catalyzes the reversible conversion of 2-phosphoglycerate (2-PG) into phosphoenolpyruvate (PEP). It is essential for the degradation of carbohydrates via glycolysis. The protein is Enolase of Bifidobacterium longum (strain DJO10A).